Consider the following 418-residue polypeptide: MEVNPPKQEHLLALKVMRLTKPTLFTNIPVTCEEKDLPGDLFNQLMKDDPSTVNGAEILMLGEMLTLPQNFGNIFLGETFSSYISVHNDSNQVVKDILVKADLQTSSQRLNLSASNAAVAELKPDCCIDDVIHHEVKEIGTHILVCAVSYTTQGGEKMYFRKFFKFQVLKPLDVKTKFYNAESDLSSVTDEVFLEAQIQNITTSPMFMEKVSLEPSIMYNVTELNSVNQAGECVSTFGSRGYLQPMDTRQYLYCLKPKKEFAEKAGIIKGVTVIGKLDIVWKTNLGERGRLQTSQLQRMAPGYGDVRLSLEAIPDTVNLEEPFHITCKITNCSSERTMDLVLEMCNTTSIHWCGISGRQLGKLHPSSSLCLALTLLSSVQGLQSVSGLRLTDTFLKRTYEYDDIAQVCVVSAAVEVEA.

The protein belongs to the TRAPPC13 family. Part of the multisubunit TRAPP (transport protein particle) complex.

The chain is Trafficking protein particle complex subunit 13 (Trappc13) from Rattus norvegicus (Rat).